The sequence spans 327 residues: Phosphoenolpyruvate transferase (327 aa).

Asp-59 lines the 7,8-didemethyl-8-hydroxy-5-deazariboflavin pocket.

This sequence belongs to the CofD family. In terms of assembly, homodimer. Mg(2+) serves as cofactor.

It carries out the reaction enolpyruvoyl-2-diphospho-5'-guanosine + 7,8-didemethyl-8-hydroxy-5-deazariboflavin = dehydro coenzyme F420-0 + GMP + H(+). The protein operates within cofactor biosynthesis; coenzyme F420 biosynthesis. Functionally, catalyzes the transfer of the phosphoenolpyruvate moiety from enoylpyruvoyl-2-diphospho-5'-guanosine (EPPG) to 7,8-didemethyl-8-hydroxy-5-deazariboflavin (FO) with the formation of dehydro coenzyme F420-0 and GMP. The polypeptide is Phosphoenolpyruvate transferase (Mycolicibacterium smegmatis (strain ATCC 700084 / mc(2)155) (Mycobacterium smegmatis)).